The sequence spans 434 residues: Serine--tRNA ligase (434 aa).

L-serine is bound at residue 239–241 (TAE). 270–272 (RSE) lines the ATP pocket. An L-serine-binding site is contributed by glutamate 293. 357–360 (EISS) is a binding site for ATP. Residue serine 393 coordinates L-serine.

It belongs to the class-II aminoacyl-tRNA synthetase family. Type-1 seryl-tRNA synthetase subfamily. In terms of assembly, homodimer. The tRNA molecule binds across the dimer.

It is found in the cytoplasm. It catalyses the reaction tRNA(Ser) + L-serine + ATP = L-seryl-tRNA(Ser) + AMP + diphosphate + H(+). The enzyme catalyses tRNA(Sec) + L-serine + ATP = L-seryl-tRNA(Sec) + AMP + diphosphate + H(+). The protein operates within aminoacyl-tRNA biosynthesis; selenocysteinyl-tRNA(Sec) biosynthesis; L-seryl-tRNA(Sec) from L-serine and tRNA(Sec): step 1/1. In terms of biological role, catalyzes the attachment of serine to tRNA(Ser). Is also able to aminoacylate tRNA(Sec) with serine, to form the misacylated tRNA L-seryl-tRNA(Sec), which will be further converted into selenocysteinyl-tRNA(Sec). The chain is Serine--tRNA ligase from Mesorhizobium japonicum (strain LMG 29417 / CECT 9101 / MAFF 303099) (Mesorhizobium loti (strain MAFF 303099)).